The chain runs to 101 residues: UPF0213 protein lp_2058 (101 aa).

The region spanning 15 to 92 (KKYYFYVLLC…KHQSRAAKLK (78 aa)) is the GIY-YIG domain.

The protein belongs to the UPF0213 family.

This chain is UPF0213 protein lp_2058, found in Lactiplantibacillus plantarum (strain ATCC BAA-793 / NCIMB 8826 / WCFS1) (Lactobacillus plantarum).